The following is a 321-amino-acid chain: MSFAKSCKNELSRIEINRECCERAELAAFIHMNGSLTIKGDVTLHLTTENPAIARRIFRVFKSRFKKEMQILMRKKMRLQKGNSYSLILTGKNTVSLVLSNLEITKGSFDLNTGITPELVANRCCKRAYLRGAFMARGSIANPDASYHMEMTADYEEYLDDLIKVMQYFELSPGKLARKKEYVSYLKDSEQICEFLNIIGAHKTLLDYENVRVMKGMRNKINRLVNCETANLQKTVVASLRHIKNIQTIDENLGLTQLPKSLQEVAIKRVEYPEANLKELGELLEPPVGKSGVNHRLRKLEKIAEQLHQTGYYDENNGYLQ.

The H-T-H motif DNA-binding region spans Asn276–Gln309.

The protein belongs to the WhiA family.

Its function is as follows. Involved in cell division and chromosome segregation. This is Probable cell division protein WhiA from Natranaerobius thermophilus (strain ATCC BAA-1301 / DSM 18059 / JW/NM-WN-LF).